The sequence spans 593 residues: Methylenetetrahydrofolate reductase (NADH) 1 (593 aa).

Residue Glu-21 is the Proton donor/acceptor of the active site. Residues Glu-21 to Lys-26 and Thr-52 to Trp-53 contribute to the NAD(+) site. Residues Thr-52–Trp-53, His-81, Arg-111–Asp-113, Tyr-153, His-157–Ala-160, Asp-175, and Lys-182 each bind FAD. Asp-113 is a substrate binding site. Substrate-binding residues include Gln-193 and Tyr-285.

This sequence belongs to the methylenetetrahydrofolate reductase family. Homodimer. The cofactor is FAD.

It carries out the reaction (6S)-5-methyl-5,6,7,8-tetrahydrofolate + NAD(+) = (6R)-5,10-methylene-5,6,7,8-tetrahydrofolate + NADH + H(+). The protein operates within one-carbon metabolism; tetrahydrofolate interconversion. Its activity is regulated as follows. Plant MTHFRs strongly prefer NADH over NADPH. Not inhibited by methionine or S-adenosylmethionine. In terms of biological role, the probable reversibility of the MTHFR reaction in plants suggests that they can metabolize the methyl group of 5,10-methylenetetrahydrofolate to serine, sugars and starch. The chain is Methylenetetrahydrofolate reductase (NADH) 1 from Zea mays (Maize).